The chain runs to 134 residues: Large ribosomal subunit protein uL16 (134 aa).

The span at 1 to 20 shows a compositional bias: basic residues; it reads MLLQPKRTKFRKMHKGRNRG. A disordered region spans residues 1–21; that stretch reads MLLQPKRTKFRKMHKGRNRGT.

The protein belongs to the universal ribosomal protein uL16 family. Part of the 50S ribosomal subunit.

Its function is as follows. Binds 23S rRNA and is also seen to make contacts with the A and possibly P site tRNAs. This is Large ribosomal subunit protein uL16 from Blochmanniella pennsylvanica (strain BPEN).